The primary structure comprises 392 residues: Methylthioribose kinase (392 aa).

ATP contacts are provided by residues N38, K53, and 107 to 109; that span reads EDL. Position 225 (D225) interacts with substrate. Residue 242 to 244 coordinates ATP; that stretch reads DPE. Position 332 (R332) interacts with substrate.

It belongs to the methylthioribose kinase family. In terms of assembly, homodimer.

The enzyme catalyses 5-(methylsulfanyl)-D-ribose + ATP = 5-(methylsulfanyl)-alpha-D-ribose 1-phosphate + ADP + H(+). It participates in amino-acid biosynthesis; L-methionine biosynthesis via salvage pathway; S-methyl-5-thio-alpha-D-ribose 1-phosphate from S-methyl-5'-thioadenosine (hydrolase route): step 2/2. Catalyzes the phosphorylation of methylthioribose into methylthioribose-1-phosphate. The protein is Methylthioribose kinase of Bacillus mycoides (strain KBAB4) (Bacillus weihenstephanensis).